Consider the following 760-residue polypeptide: Catecholate siderophore receptor Fiu (760 aa).

An N-terminal signal peptide occupies residues 1–31 (MENNRNFPARQFHSLTFFAGLCIGITPVAQA). The 109-residue stretch at 67-175 (PVADTTRTMT…PTGSINMISK (109 aa)) folds into the TBDR plug domain. The TBDR beta-barrel domain maps to 180–760 (DSGIDASASI…TFLLTANMHF (581 aa)). The short motif at 743–760 (RYHPGEPRTFLLTANMHF) is the TonB C-terminal box element.

Belongs to the TonB-dependent receptor family.

It localises to the cell outer membrane. Functionally, involved in the active transport across the outer membrane of iron complexed with catecholate siderophores such as dihydroxybenzoylserine and dihydroxybenzoate. It derives its energy for transport by interacting with the trans-periplasmic membrane protein TonB. Can also transport catechol-substituted cephalosporins. Receptor for microcins M, H47 and E492. In Escherichia coli (strain UTI89 / UPEC), this protein is Catecholate siderophore receptor Fiu (fiu).